We begin with the raw amino-acid sequence, 201 residues long: MNDRMVWIDCEMTGLSLADDALIEVAALVTDSELNVLGEGVDIVIRPPDAALETMPEVVRQMHTASGLLDELAGGTTLADAEEQVLAYVREHVKEPGKAPLCGNSVGTDRGFLARDMRELEGYLHYRIVDVSSVKELARRWYPRAYFNSPAKNGNHRALADIRDSITELRYYREAVFVPQPGPDSERAKEIAARLSAPAAP.

The region spanning 5–169 (MVWIDCEMTG…ADIRDSITEL (165 aa)) is the Exonuclease domain. Tyr-126 is an active-site residue.

It belongs to the oligoribonuclease family.

It is found in the cytoplasm. In terms of biological role, 3'-to-5' exoribonuclease specific for small oligoribonucleotides. The chain is Oligoribonuclease from Streptomyces griseus.